A 459-amino-acid polypeptide reads, in one-letter code: Biphenyl dioxygenase subunit alpha (459 aa).

Residues 58–156 enclose the Rieske domain; that stretch reads WLLLGHESHV…KEGDCGFDKA (99 aa). 4 residues coordinate [2Fe-2S] cluster: Cys-100, His-102, Cys-120, and His-123. Fe cation is bound by residues His-233 and His-239.

This sequence belongs to the bacterial ring-hydroxylating dioxygenase alpha subunit family. Heterohexamer consisting of three BphA subunits and three BphE subunits. A ferredoxin (BphF) and a ferredoxin reductase (BphG) must be present to obtain activity. Requires [2Fe-2S] cluster as cofactor. Fe cation is required as a cofactor.

It carries out the reaction biphenyl + NADH + O2 + H(+) = (2R,3S)-3-phenylcyclohexa-3,5-diene-1,2-diol + NAD(+). Its pathway is xenobiotic degradation; biphenyl degradation; 2-hydroxy-2,4-pentadienoate and benzoate from biphenyl: step 1/4. In Paraburkholderia xenovorans (strain LB400), this protein is Biphenyl dioxygenase subunit alpha (bphA).